We begin with the raw amino-acid sequence, 626 residues long: UvrABC system protein C (626 aa).

A GIY-YIG domain is found at 20–97 (ECSGVYKMLD…IKKFQPKFNI (78 aa)). Residues 207–242 (RELQENLSKKMQELSSQMRFEEAAEIRDRIKALSYV) form the UVR domain.

Belongs to the UvrC family. As to quaternary structure, interacts with UvrB in an incision complex.

The protein localises to the cytoplasm. The UvrABC repair system catalyzes the recognition and processing of DNA lesions. UvrC both incises the 5' and 3' sides of the lesion. The N-terminal half is responsible for the 3' incision and the C-terminal half is responsible for the 5' incision. This chain is UvrABC system protein C, found in Rickettsia typhi (strain ATCC VR-144 / Wilmington).